A 228-amino-acid polypeptide reads, in one-letter code: Non-fluorescent flavoprotein (228 aa).

It belongs to the bacterial luciferase oxidoreductase family. In terms of assembly, homodimer. The cofactor is FMN.

This chain is Non-fluorescent flavoprotein (luxF), found in Photobacterium leiognathi.